A 199-amino-acid polypeptide reads, in one-letter code: Small ribosomal subunit protein uS4 (199 aa).

The S4 RNA-binding domain occupies 91-151 (SRLDNLVYRF…EKSKNVKAIA (61 aa)).

The protein belongs to the universal ribosomal protein uS4 family. As to quaternary structure, part of the 30S ribosomal subunit. Contacts protein S5. The interaction surface between S4 and S5 is involved in control of translational fidelity.

In terms of biological role, one of the primary rRNA binding proteins, it binds directly to 16S rRNA where it nucleates assembly of the body of the 30S subunit. With S5 and S12 plays an important role in translational accuracy. In Exiguobacterium sp. (strain ATCC BAA-1283 / AT1b), this protein is Small ribosomal subunit protein uS4.